We begin with the raw amino-acid sequence, 320 residues long: ATP-dependent 6-phosphofructokinase (320 aa).

Gly12 is an ATP binding site. Arg22–Arg26 serves as a coordination point for ADP. Residues Arg73–Phe74 and Gly103–Ser106 each bind ATP. Asp104 contributes to the Mg(2+) binding site. Residue Thr126–Asp128 participates in substrate binding. Catalysis depends on Asp128, which acts as the Proton acceptor. Residue Arg155 coordinates ADP. Substrate-binding positions include Arg163 and Met170–Arg172. Residues Gly186 to Glu188, Lys212, and Lys214 to His216 contribute to the ADP site. Residues Glu223, Arg244, and His250–Arg253 contribute to the substrate site.

This sequence belongs to the phosphofructokinase type A (PFKA) family. ATP-dependent PFK group I subfamily. Prokaryotic clade 'B1' sub-subfamily. Homotetramer. Mg(2+) serves as cofactor.

It localises to the cytoplasm. The enzyme catalyses beta-D-fructose 6-phosphate + ATP = beta-D-fructose 1,6-bisphosphate + ADP + H(+). It functions in the pathway carbohydrate degradation; glycolysis; D-glyceraldehyde 3-phosphate and glycerone phosphate from D-glucose: step 3/4. With respect to regulation, allosterically activated by ADP and other diphosphonucleosides, and allosterically inhibited by phosphoenolpyruvate. Its function is as follows. Catalyzes the phosphorylation of D-fructose 6-phosphate to fructose 1,6-bisphosphate by ATP, the first committing step of glycolysis. The protein is ATP-dependent 6-phosphofructokinase of Vibrio parahaemolyticus serotype O3:K6 (strain RIMD 2210633).